A 65-amino-acid polypeptide reads, in one-letter code: Alpha-toxin BeM10 (65 aa).

Positions 2–65 (RDGYIADDKD…IKQKVSGKCN (64 aa)) constitute an LCN-type CS-alpha/beta domain. Cystine bridges form between Cys12–Cys64, Cys16–Cys35, Cys22–Cys45, and Cys26–Cys47.

This sequence belongs to the long (4 C-C) scorpion toxin superfamily. Sodium channel inhibitor family. Alpha subfamily. Expressed by the venom gland.

It localises to the secreted. Functionally, alpha toxins bind voltage-independently at site-3 of sodium channels (Nav) and inhibit the inactivation of the activated channels, thereby blocking neuronal transmission. Has paralytic activity in mice. The chain is Alpha-toxin BeM10 from Mesobuthus eupeus (Lesser Asian scorpion).